The primary structure comprises 541 residues: Glucose-6-phosphate isomerase (541 aa).

Residue Glu-346 is the Proton donor of the active site. Catalysis depends on residues His-377 and Lys-506.

Belongs to the GPI family.

The protein localises to the cytoplasm. It catalyses the reaction alpha-D-glucose 6-phosphate = beta-D-fructose 6-phosphate. The protein operates within carbohydrate biosynthesis; gluconeogenesis. It functions in the pathway carbohydrate degradation; glycolysis; D-glyceraldehyde 3-phosphate and glycerone phosphate from D-glucose: step 2/4. Its function is as follows. Catalyzes the reversible isomerization of glucose-6-phosphate to fructose-6-phosphate. The polypeptide is Glucose-6-phosphate isomerase (Rhizobium meliloti (strain 1021) (Ensifer meliloti)).